Consider the following 165-residue polypeptide: Basic transcription factor 3 (165 aa).

Residues 33 to 97 (TTDDKRLQST…PQTKKLQDIL (65 aa)) form the NAC-A/B domain. The span at 120-134 (QKQASGEGNAASATI) shows a compositional bias: polar residues. Residues 120–144 (QKQASGEGNAASATIQEEDDDDVPE) form a disordered region.

Belongs to the NAC-beta family. Part of the nascent polypeptide-associated complex (NAC). Interacts with EIF(ISO)4E.

The polypeptide is Basic transcription factor 3 (Arabidopsis thaliana (Mouse-ear cress)).